The following is a 299-amino-acid chain: uncharacterized protein (299 aa).

The interval 1–44 (MSDSNLTNPIKAFFHDEFPEQYQEPPGLQKNMKPVPDCGEKSYK) is disordered. Residue 55 to 79 (LVTGGDSGIGRAAAIAYAREGADVA) coordinates NADP(+). Ser-188 contributes to the substrate binding site. Tyr-201 functions as the Proton acceptor in the catalytic mechanism.

It belongs to the short-chain dehydrogenases/reductases (SDR) family.

This is an uncharacterized protein from Bacillus subtilis (strain 168).